We begin with the raw amino-acid sequence, 747 residues long: Fibroblast growth factor receptor (747 aa).

Residues 1–24 (MIQLQNTFIFIALTIFTSASTTSL) form the signal peptide. At 25-288 (KNETKPLNTI…TEEIPQDTHY (264 aa)) the chain is on the extracellular side. N-linked (GlcNAc...) asparagine glycans are attached at residues asparagine 26, asparagine 42, and asparagine 63. A disordered region spans residues 47–68 (EEDLFDTNGAPKSDTVNASTTT). 2 Ig-like C2-type domains span residues 74 to 167 (PRWV…YELD) and 175 to 267 (PPVL…AWLT). Cysteine 99 and cysteine 151 are disulfide-bonded. 5 N-linked (GlcNAc...) asparagine glycosylation sites follow: asparagine 161, asparagine 185, asparagine 217, asparagine 227, and asparagine 240. Cysteine 198 and cysteine 251 form a disulfide bridge. The helical transmembrane segment at 289–309 (LIYIFGVVCFIILLAFIVYMC) threads the bilayer. Residues 310–747 (NSRYQNKDPP…NGHARMQSDV (438 aa)) are Cytoplasmic-facing. A Protein kinase domain is found at 377–660 (ILLHERIDEG…QLVEDLDRML (284 aa)). Residues 383–391 (IDEGFFGQV) and lysine 412 each bind ATP. The active-site Proton acceptor is the aspartate 525. Tyrosine 556 carries the post-translational modification Phosphotyrosine; by autocatalysis. The disordered stretch occupies residues 679–731 (YLPSDVDSNEDTESRDSANATGEDSDSVFEPIDGHGAHAYEVDEAGPLLNPQP). Basic and acidic residues predominate over residues 710 to 719 (IDGHGAHAYE).

This sequence belongs to the protein kinase superfamily. Tyr protein kinase family. Fibroblast growth factor receptor subfamily.

Its subcellular location is the membrane. The enzyme catalyses L-tyrosyl-[protein] + ATP = O-phospho-L-tyrosyl-[protein] + ADP + H(+). Receptor for basic fibroblast growth factor. This chain is Fibroblast growth factor receptor (FGFR), found in Ciona intestinalis (Transparent sea squirt).